We begin with the raw amino-acid sequence, 327 residues long: Small ribosomal subunit protein RACK1 (327 aa).

7 WD repeats span residues 13–44 (AHTDMVTAIATPIDNSDTIVSASRDKSIIVWK), 61–91 (GHSHFVEDVVLSSDGQFALSGSWDGELRLWD), 103–133 (GHTKDVLSVAFSLDNRQIVSASRDRTIKLWN), 148–180 (GHRDWVSCVRFSPNTLQPTIVSASCDKTVKVWN), 192–222 (GHTGYVSTVAVSPDGSLCASGGKDGVVLLWD), 233–262 (EANSVIHALCFTPNRYWLCAATEQGIKIWD), and 293–323 (RKVIYCTSLNWSADGSTLFSGYTDGVIRVWG).

The protein belongs to the WD repeat G protein beta family. Ribosomal protein RACK1 subfamily.

In Brassica napus (Rape), this protein is Small ribosomal subunit protein RACK1 (GB1).